We begin with the raw amino-acid sequence, 801 residues long: Probable methionine--tRNA ligase (801 aa).

The short motif at 25-35 (PYVNNVPHLGN) is the 'HIGH' region element. A 'KMSKS' region motif is present at residues 347-351 (KFSKS). ATP is bound at residue lysine 350. The segment at 606 to 633 (DKLKGTKLSDGGQKKEQKKQSGGSKSKN) is disordered. The 104-residue stretch at 639 to 742 (TVAKLDIRVG…ESAAVGERVT (104 aa)) folds into the tRNA-binding domain.

This sequence belongs to the class-I aminoacyl-tRNA synthetase family.

Its subcellular location is the cytoplasm. The catalysed reaction is tRNA(Met) + L-methionine + ATP = L-methionyl-tRNA(Met) + AMP + diphosphate. The polypeptide is Probable methionine--tRNA ligase (Oryza sativa subsp. japonica (Rice)).